Here is a 293-residue protein sequence, read N- to C-terminus: Formamidopyrimidine-DNA glycosylase (293 aa).

The active-site Schiff-base intermediate with DNA is Pro-2. The Proton donor role is filled by Glu-3. Lys-58 serves as the catalytic Proton donor; for beta-elimination activity. His-104, Arg-123, and Lys-166 together coordinate DNA. The FPG-type zinc-finger motif lies at 257–293; sequence QVYDREGEPCRTDGCEGVVKRFVQNGRSTFWCPKCQR. Residue Arg-283 is the Proton donor; for delta-elimination activity of the active site.

It belongs to the FPG family. In terms of assembly, monomer. The cofactor is Zn(2+).

It catalyses the reaction Hydrolysis of DNA containing ring-opened 7-methylguanine residues, releasing 2,6-diamino-4-hydroxy-5-(N-methyl)formamidopyrimidine.. It carries out the reaction 2'-deoxyribonucleotide-(2'-deoxyribose 5'-phosphate)-2'-deoxyribonucleotide-DNA = a 3'-end 2'-deoxyribonucleotide-(2,3-dehydro-2,3-deoxyribose 5'-phosphate)-DNA + a 5'-end 5'-phospho-2'-deoxyribonucleoside-DNA + H(+). Involved in base excision repair of DNA damaged by oxidation or by mutagenic agents. Acts as a DNA glycosylase that recognizes and removes damaged bases. Has a preference for oxidized purines, such as 7,8-dihydro-8-oxoguanine (8-oxoG). Has AP (apurinic/apyrimidinic) lyase activity and introduces nicks in the DNA strand. Cleaves the DNA backbone by beta-delta elimination to generate a single-strand break at the site of the removed base with both 3'- and 5'-phosphates. This chain is Formamidopyrimidine-DNA glycosylase, found in Bradyrhizobium sp. (strain ORS 278).